The sequence spans 285 residues: (2Z,6Z)-farnesyl diphosphate synthase CPT6, chloroplastic (285 aa).

Residues 1–30 (MNSLFVGRPIVKSSYNVYTLPSSICGGHFF) constitute a chloroplast transit peptide. Aspartate 65 is an active-site residue.

It belongs to the UPP synthase family. Requires Mg(2+) as cofactor. In terms of tissue distribution, expressed in roots and red fruits.

The protein localises to the plastid. It is found in the chloroplast. It carries out the reaction 2 isopentenyl diphosphate + dimethylallyl diphosphate = (2Z,6Z)-farnesyl diphosphate + 2 diphosphate. The enzyme catalyses isopentenyl diphosphate + dimethylallyl diphosphate = neryl diphosphate + diphosphate. The catalysed reaction is neryl diphosphate + isopentenyl diphosphate = (2Z,6Z)-farnesyl diphosphate + diphosphate. Functionally, uses neryl diphosphate to catalyze the cis-prenyl chain elongation and produce the 15 carbon product (2Z,6Z)-farnesyl diphosphate. This chain is (2Z,6Z)-farnesyl diphosphate synthase CPT6, chloroplastic, found in Solanum lycopersicum (Tomato).